The following is a 498-amino-acid chain: ATP synthase subunit beta, chloroplastic (498 aa).

172–179 (GGAGVGKT) is an ATP binding site.

Belongs to the ATPase alpha/beta chains family. F-type ATPases have 2 components, CF(1) - the catalytic core - and CF(0) - the membrane proton channel. CF(1) has five subunits: alpha(3), beta(3), gamma(1), delta(1), epsilon(1). CF(0) has four main subunits: a(1), b(1), b'(1) and c(9-12).

The protein localises to the plastid. Its subcellular location is the chloroplast thylakoid membrane. The enzyme catalyses ATP + H2O + 4 H(+)(in) = ADP + phosphate + 5 H(+)(out). Functionally, produces ATP from ADP in the presence of a proton gradient across the membrane. The catalytic sites are hosted primarily by the beta subunits. The protein is ATP synthase subunit beta, chloroplastic of Populus tremuloides (Quaking aspen).